We begin with the raw amino-acid sequence, 112 residues long: UPF0342 protein STER_0693 (112 aa).

This sequence belongs to the UPF0342 family.

The protein is UPF0342 protein STER_0693 of Streptococcus thermophilus (strain ATCC BAA-491 / LMD-9).